A 357-amino-acid chain; its full sequence is MHNQYGSIFSITTWGESHGPAIGVVIDGCPAGLSLSPEDFLPAMARRRPGQLHTSPRQEPDLVTILSGVYQNKTTGTPISLLIENKDVSSSSYEQLQHCYRPGHAQFAYEGKYGFADNRGGGRASARETASRVAAGVIAKKILLSQRIETLAFLSGFGTLESKNYPKLSDSLIQQVHTSPFYTLLPQEEIQNLLLLNPDDSFGGVVSFITSPLPIGLGEPVFGKLPALLAAAMMSIPAAKGFEIGAGFSSSQMTGSAYLDAFIADESGVSLQSNRCGGALGGISIGQPLEGRVAFKPTSSIKKPCSSVLKDGTPIAYRTPNQGRHDPCVAIRAVAVVEAMLDLTLVDLLLQHRCTQL.

NADP(+) is bound at residue Arg-47. FMN-binding positions include 123–125 (RAS), Gly-281, 296–300 (KPTSS), and Arg-324.

The protein belongs to the chorismate synthase family. As to quaternary structure, homotetramer. FMNH2 serves as cofactor.

It catalyses the reaction 5-O-(1-carboxyvinyl)-3-phosphoshikimate = chorismate + phosphate. The protein operates within metabolic intermediate biosynthesis; chorismate biosynthesis; chorismate from D-erythrose 4-phosphate and phosphoenolpyruvate: step 7/7. In terms of biological role, catalyzes the anti-1,4-elimination of the C-3 phosphate and the C-6 proR hydrogen from 5-enolpyruvylshikimate-3-phosphate (EPSP) to yield chorismate, which is the branch point compound that serves as the starting substrate for the three terminal pathways of aromatic amino acid biosynthesis. This reaction introduces a second double bond into the aromatic ring system. The sequence is that of Chorismate synthase from Chlamydia trachomatis serovar A (strain ATCC VR-571B / DSM 19440 / HAR-13).